Here is a 333-residue protein sequence, read N- to C-terminus: MTIVVTGAAGFIGSNLVKGLNQRGITDIIAVDNLSNGDKFHNLVDCEISHYLDKHEFLHLLLDGEYEGELSAILHQGACSDTMNHDGKYMMDNNYQYTLALFDYCQHEEIQFLYASSAATYGKGTVFKEERQHEGPLNVYGYSKFLFDQVLRQRIKEGLSAQAVGFRYFNVYGPREQHKGRMASVAFHHFNQYREHGKVKLFGGWDGWENGMQSRDFVSVEDVVKVNLFFLDNPGKSGIYNLGSGRSQPFNDVAEATVNACRRHEGKPALTLAEMIQQGIVEYIDFPDALKGKYQSFTQADIAKLREAGYAEAMLSVAEGVDRYVDWLIGRQG.

Residues 11 to 12 (FI), 32 to 33 (DN), Lys-39, Lys-54, 76 to 80 (QGACS), and Asn-93 each bind NADP(+). Catalysis depends on Tyr-140, which acts as the Proton acceptor. An NADP(+)-binding site is contributed by Lys-144. Asn-170 contacts substrate. NADP(+) contacts are provided by Val-171 and Lys-179. Lys-179 acts as the Proton acceptor in catalysis. Substrate is bound by residues Arg-181, His-188, 202 to 205 (FGGW), Arg-215, and Tyr-294.

The protein belongs to the NAD(P)-dependent epimerase/dehydratase family. HldD subfamily. Homopentamer. It depends on NADP(+) as a cofactor.

It catalyses the reaction ADP-D-glycero-beta-D-manno-heptose = ADP-L-glycero-beta-D-manno-heptose. The protein operates within nucleotide-sugar biosynthesis; ADP-L-glycero-beta-D-manno-heptose biosynthesis; ADP-L-glycero-beta-D-manno-heptose from D-glycero-beta-D-manno-heptose 7-phosphate: step 4/4. It functions in the pathway bacterial outer membrane biogenesis; LPS core biosynthesis. Catalyzes the interconversion between ADP-D-glycero-beta-D-manno-heptose and ADP-L-glycero-beta-D-manno-heptose via an epimerization at carbon 6 of the heptose. In Chromobacterium violaceum (strain ATCC 12472 / DSM 30191 / JCM 1249 / CCUG 213 / NBRC 12614 / NCIMB 9131 / NCTC 9757 / MK), this protein is ADP-L-glycero-D-manno-heptose-6-epimerase.